A 156-amino-acid polypeptide reads, in one-letter code: 6,7-dimethyl-8-ribityllumazine synthase (156 aa).

Residues Phe-22, 57-59 (AYE), and 81-83 (TVI) each bind 5-amino-6-(D-ribitylamino)uracil. 86–87 (GT) contacts (2S)-2-hydroxy-3-oxobutyl phosphate. Residue His-89 is the Proton donor of the active site. Phe-114 lines the 5-amino-6-(D-ribitylamino)uracil pocket. Residue Arg-128 participates in (2S)-2-hydroxy-3-oxobutyl phosphate binding.

It belongs to the DMRL synthase family. In terms of assembly, forms an icosahedral capsid composed of 60 subunits, arranged as a dodecamer of pentamers.

The enzyme catalyses (2S)-2-hydroxy-3-oxobutyl phosphate + 5-amino-6-(D-ribitylamino)uracil = 6,7-dimethyl-8-(1-D-ribityl)lumazine + phosphate + 2 H2O + H(+). It participates in cofactor biosynthesis; riboflavin biosynthesis; riboflavin from 2-hydroxy-3-oxobutyl phosphate and 5-amino-6-(D-ribitylamino)uracil: step 1/2. Functionally, catalyzes the formation of 6,7-dimethyl-8-ribityllumazine by condensation of 5-amino-6-(D-ribitylamino)uracil with 3,4-dihydroxy-2-butanone 4-phosphate. This is the penultimate step in the biosynthesis of riboflavin. The chain is 6,7-dimethyl-8-ribityllumazine synthase from Edwardsiella ictaluri (strain 93-146).